Here is a 404-residue protein sequence, read N- to C-terminus: Probable tRNA sulfurtransferase (404 aa).

Residues 60 to 165 (HEVAESLKEI…DEAAYISYEN (106 aa)) form the THUMP domain. ATP contacts are provided by residues 183-184 (ML), 208-209 (HF), arginine 265, glycine 287, and glutamine 296.

The protein belongs to the ThiI family.

It localises to the cytoplasm. It catalyses the reaction [ThiI sulfur-carrier protein]-S-sulfanyl-L-cysteine + a uridine in tRNA + 2 reduced [2Fe-2S]-[ferredoxin] + ATP + H(+) = [ThiI sulfur-carrier protein]-L-cysteine + a 4-thiouridine in tRNA + 2 oxidized [2Fe-2S]-[ferredoxin] + AMP + diphosphate. The catalysed reaction is [ThiS sulfur-carrier protein]-C-terminal Gly-Gly-AMP + S-sulfanyl-L-cysteinyl-[cysteine desulfurase] + AH2 = [ThiS sulfur-carrier protein]-C-terminal-Gly-aminoethanethioate + L-cysteinyl-[cysteine desulfurase] + A + AMP + 2 H(+). The protein operates within cofactor biosynthesis; thiamine diphosphate biosynthesis. Its function is as follows. Catalyzes the ATP-dependent transfer of a sulfur to tRNA to produce 4-thiouridine in position 8 of tRNAs, which functions as a near-UV photosensor. Also catalyzes the transfer of sulfur to the sulfur carrier protein ThiS, forming ThiS-thiocarboxylate. This is a step in the synthesis of thiazole, in the thiamine biosynthesis pathway. The sulfur is donated as persulfide by IscS. In Streptococcus agalactiae serotype III (strain NEM316), this protein is Probable tRNA sulfurtransferase.